The sequence spans 409 residues: Elongation factor Tu (409 aa).

In terms of domain architecture, tr-type G spans 10–214 (KPHLNIGTIG…AVDSFIPTPE (205 aa)). The tract at residues 19-26 (GHVDHGKT) is G1. 19–26 (GHVDHGKT) serves as a coordination point for GTP. Thr-26 contributes to the Mg(2+) binding site. Residues 60–64 (GITIN) form a G2 region. The tract at residues 81 to 84 (DCPG) is G3. GTP-binding positions include 81–85 (DCPGH) and 136–139 (NKED). The tract at residues 136-139 (NKED) is G4. Residues 174–176 (SGL) form a G5 region.

Belongs to the TRAFAC class translation factor GTPase superfamily. Classic translation factor GTPase family. EF-Tu/EF-1A subfamily. As to quaternary structure, monomer.

The protein localises to the cytoplasm. The enzyme catalyses GTP + H2O = GDP + phosphate + H(+). Its function is as follows. GTP hydrolase that promotes the GTP-dependent binding of aminoacyl-tRNA to the A-site of ribosomes during protein biosynthesis. The protein is Elongation factor Tu of Nostoc punctiforme (strain ATCC 29133 / PCC 73102).